The primary structure comprises 406 residues: Eukaryotic initiation factor 4A-I (406 aa).

Positions 1–21 (MSASQDSRSRDNGPDGMEPEG) are disordered. N-acetylserine is present on Ser2. At Ser4 the chain carries Phosphoserine. A Q motif motif is present at residues 32–60 (DSLDDMNLSESLLRGIYAYGFEKPSAIQQ). One can recognise a Helicase ATP-binding domain in the interval 63 to 234 (ILSCIKGYDV…KKFMRDPIRI (172 aa)). 76-83 (AQSGTGKT) contributes to the ATP binding site. At Lys118 the chain carries N6-acetyllysine. Residue Lys146 forms a Glycyl lysine isopeptide (Lys-Gly) (interchain with G-Cter in SUMO2) linkage. Thr158 bears the Phosphothreonine mark. An N6-acetyllysine modification is found at Lys174. Positions 182–185 (DEAD) match the DEAD box motif. Lys193 is subject to N6-acetyllysine. Residue Lys225 forms a Glycyl lysine isopeptide (Lys-Gly) (interchain with G-Cter in SUMO2) linkage. At Lys238 the chain carries N6-acetyllysine; alternate. Residue Lys238 forms a Glycyl lysine isopeptide (Lys-Gly) (interchain with G-Cter in SUMO2); alternate linkage. In terms of domain architecture, Helicase C-terminal spans 245 to 406 (GIRQFYINVE…EMPLNVADLI (162 aa)). Residues Lys309, Lys369, and Lys381 each participate in a glycyl lysine isopeptide (Lys-Gly) (interchain with G-Cter in SUMO2) cross-link.

This sequence belongs to the DEAD box helicase family. eIF4A subfamily. In terms of assembly, eIF4F is a multi-subunit complex, the composition of which varies with external and internal environmental conditions. It is composed of at least EIF4A, EIF4E and EIF4G1/EIF4G3. Interacts with PAIP1, EIF4E and UPF2. Found in a complex with XPO7, EIF4A1, ARHGAP1, VPS26A, VPS29, VPS35 and SFN. May interact with NOM1. Interacts with PDCD4; this interferes with the interaction between EIF4A and EIF4G. Interacts with RBM4. Interacts with DDX3X in an RNA-independent manner. Interacts with PKP1 (via N-terminus); the interaction promotes EIF4A1 recruitment to the cap-dependent translation complex and EIF4A1 ATPase activity.

It localises to the cytoplasm. It is found in the perinuclear region. Its subcellular location is the cell membrane. The protein resides in the stress granule. The catalysed reaction is ATP + H2O = ADP + phosphate + H(+). ATP-dependent RNA helicase which is a subunit of the eIF4F complex involved in cap recognition and is required for mRNA binding to ribosome. In the current model of translation initiation, eIF4A unwinds RNA secondary structures in the 5'-UTR of mRNAs which is necessary to allow efficient binding of the small ribosomal subunit, and subsequent scanning for the initiator codon. As a result, promotes cell proliferation and growth. The protein is Eukaryotic initiation factor 4A-I (EIF4A1) of Pongo abelii (Sumatran orangutan).